The chain runs to 370 residues: 4-hydroxy-3-methylbut-2-en-1-yl diphosphate synthase (flavodoxin) (370 aa).

Residues Cys-268, Cys-271, Cys-303, and Glu-310 each contribute to the [4Fe-4S] cluster site.

Belongs to the IspG family. [4Fe-4S] cluster serves as cofactor.

It catalyses the reaction (2E)-4-hydroxy-3-methylbut-2-enyl diphosphate + oxidized [flavodoxin] + H2O + 2 H(+) = 2-C-methyl-D-erythritol 2,4-cyclic diphosphate + reduced [flavodoxin]. It functions in the pathway isoprenoid biosynthesis; isopentenyl diphosphate biosynthesis via DXP pathway; isopentenyl diphosphate from 1-deoxy-D-xylulose 5-phosphate: step 5/6. Its function is as follows. Converts 2C-methyl-D-erythritol 2,4-cyclodiphosphate (ME-2,4cPP) into 1-hydroxy-2-methyl-2-(E)-butenyl 4-diphosphate. This Bacillus cereus (strain AH187) protein is 4-hydroxy-3-methylbut-2-en-1-yl diphosphate synthase (flavodoxin).